A 66-amino-acid chain; its full sequence is Large ribosomal subunit protein bL31 (66 aa).

Cys-16, Cys-18, Cys-36, and Cys-39 together coordinate Zn(2+).

This sequence belongs to the bacterial ribosomal protein bL31 family. Type A subfamily. Part of the 50S ribosomal subunit. Zn(2+) serves as cofactor.

Functionally, binds the 23S rRNA. The protein is Large ribosomal subunit protein bL31 of Moorella thermoacetica (strain ATCC 39073 / JCM 9320).